We begin with the raw amino-acid sequence, 377 residues long: Protein RecA (377 aa).

The segment covering 1–13 has biased composition (polar residues); sequence MSNEGKPLQSTES. Positions 1–20 are disordered; it reads MSNEGKPLQSTESTKIDAKS. 82 to 89 serves as a coordination point for ATP; the sequence is GPESSGKT. Residues 346–377 are disordered; that stretch reads GSEVSANSMRPLASAARQASSRPKLSQVSANG. Positions 362 to 377 are enriched in polar residues; that stretch reads RQASSRPKLSQVSANG.

Belongs to the RecA family.

It is found in the cytoplasm. In terms of biological role, can catalyze the hydrolysis of ATP in the presence of single-stranded DNA, the ATP-dependent uptake of single-stranded DNA by duplex DNA, and the ATP-dependent hybridization of homologous single-stranded DNAs. It interacts with LexA causing its activation and leading to its autocatalytic cleavage. In Prochlorococcus marinus (strain NATL1A), this protein is Protein RecA.